We begin with the raw amino-acid sequence, 267 residues long: tRNA pseudouridine synthase A (267 aa).

The active-site Nucleophile is the aspartate 51. Residue tyrosine 109 coordinates substrate.

This sequence belongs to the tRNA pseudouridine synthase TruA family. As to quaternary structure, homodimer.

It catalyses the reaction uridine(38/39/40) in tRNA = pseudouridine(38/39/40) in tRNA. In terms of biological role, formation of pseudouridine at positions 38, 39 and 40 in the anticodon stem and loop of transfer RNAs. This Staphylococcus epidermidis (strain ATCC 12228 / FDA PCI 1200) protein is tRNA pseudouridine synthase A.